Reading from the N-terminus, the 339-residue chain is MTFRMPPEWAPHERTWMAWPGPNATFTDAEELAGARAAWASVARAVRRFEPVTMVHGPGQAATARELLGPDVDLVERELDDAWMRDIGPTFVTDGRGGLAAVDWVFNGWGAQDWARWEHDAEIARHVADLAAAPVLSSPLVNEGGAIHVDGEGTVLLTDTVQLGSGRNPGWSREEVEAEIHAKLGTTTAIWLPHGLAGDYGRYGTQGHVDIVAAFARPGTVVVHSQRDPRHPDHERSQLYLEILRGRTDARGRRLEVVEVPAPTVLKDEEGEWADYSYINHYVCNGGVVLCAFGDPNDELAAGIFRRLFPERTVTLVDARTIFAGGGGIHCITQQQPRT.

The active-site Amidino-cysteine intermediate is Cys331.

It belongs to the agmatine deiminase family.

The catalysed reaction is agmatine + H2O = N-carbamoylputrescine + NH4(+). This Streptomyces coelicolor (strain ATCC BAA-471 / A3(2) / M145) protein is Putative agmatine deiminase.